Consider the following 229-residue polypeptide: 3-dehydroquinate dehydratase (229 aa).

3-dehydroquinate contacts are provided by residues glutamate 33–arginine 35 and arginine 65. Histidine 121 acts as the Proton donor/acceptor in catalysis. Catalysis depends on lysine 146, which acts as the Schiff-base intermediate with substrate. Residues arginine 188, serine 207, and glutamine 211 each coordinate 3-dehydroquinate.

Belongs to the type-I 3-dehydroquinase family. As to quaternary structure, homodimer.

The enzyme catalyses 3-dehydroquinate = 3-dehydroshikimate + H2O. Its pathway is metabolic intermediate biosynthesis; chorismate biosynthesis; chorismate from D-erythrose 4-phosphate and phosphoenolpyruvate: step 3/7. In terms of biological role, involved in the third step of the chorismate pathway, which leads to the biosynthesis of aromatic amino acids. Catalyzes the cis-dehydration of 3-dehydroquinate (DHQ) and introduces the first double bond of the aromatic ring to yield 3-dehydroshikimate. This Lactococcus lactis subsp. cremoris (strain SK11) protein is 3-dehydroquinate dehydratase.